We begin with the raw amino-acid sequence, 341 residues long: Cytoplasmic tRNA 2-thiolation protein 1 (341 aa).

It belongs to the TtcA family. CTU1/NCS6/ATPBD3 subfamily.

The protein resides in the cytoplasm. The protein operates within tRNA modification; 5-methoxycarbonylmethyl-2-thiouridine-tRNA biosynthesis. Plays a central role in 2-thiolation of mcm(5)S(2)U at tRNA wobble positions of tRNA(Lys), tRNA(Glu) and tRNA(Gln). Directly binds tRNAs and probably acts by catalyzing adenylation of tRNAs, an intermediate required for 2-thiolation. It is unclear whether it acts as a sulfurtransferase that transfers sulfur from thiocarboxylated URM1 onto the uridine of tRNAs at wobble position. The chain is Cytoplasmic tRNA 2-thiolation protein 1 from Aedes aegypti (Yellowfever mosquito).